The chain runs to 824 residues: Silver exporting P-type ATPase (824 aa).

The tract at residues 89 to 112 (ASEHHHHHDHHEVSPDKIKQSHRQ) is disordered. Residues 98-112 (HHEVSPDKIKQSHRQ) are compositionally biased toward basic and acidic residues. The next 6 helical transmembrane spans lie at 167 to 187 (FWLGLLLAFPVLILEMGSHLF), 200 to 220 (TWLQLLLASPVVLWCGWPFFA), 234 to 254 (FTLVAMGTGVAWVYSVIATVF), 268 to 288 (LVAIYFEAAAVITVLVLLGQV), 427 to 447 (WFVPLVILIAVVAFMIWSVWG), and 455 to 475 (GLIAAVSVLIIACPCALGLAT). Catalysis depends on D511, which acts as the 4-aspartylphosphate intermediate. The next 2 membrane-spanning stretches (helical) occupy residues 764 to 784 (IRQNLFFAFIYNALGVPVAAG) and 785 to 805 (LLYPVYGILLSPVIAAAAMAL).

It belongs to the cation transport ATPase (P-type) (TC 3.A.3) family. Type IB subfamily.

It is found in the cell membrane. The enzyme catalyses Ag(+)(in) + ATP + H2O = Ag(+)(out) + ADP + phosphate + H(+). Component of the sil cation-efflux system that confers resistance to silver. The protein is Silver exporting P-type ATPase (silP) of Salmonella typhimurium.